The chain runs to 371 residues: Terpene cyclase 6 (371 aa).

Mg(2+) is bound by residues Asp144, Asn266, Ser270, and Glu274. Positions 144 to 148 (DDVME) match the D(D/E)XX(D/E) motif motif. The NSE motif motif lies at 266-274 (NDLYSYDKE). Residues 352-359 (HHATLGRY) carry the WxxxxxRY motif motif. (2E,6E)-farnesyl diphosphate is bound by residues Arg358 and Tyr359.

Belongs to the terpene synthase family. As to quaternary structure, homodimer. It depends on Mg(2+) as a cofactor.

The enzyme catalyses (2E,6E)-farnesyl diphosphate + H2O = (-)-alpha-acorenol + diphosphate. The protein operates within sesquiterpene biosynthesis. Its function is as follows. Terpene cyclase that catalyzes the cyclization of farnesyl diphosphate (FPP) to the spirocyclic sesquiterpene alpha-acorenol. This is Terpene cyclase 6 from Gibberella fujikuroi (strain CBS 195.34 / IMI 58289 / NRRL A-6831) (Bakanae and foot rot disease fungus).